Here is a 166-residue protein sequence, read N- to C-terminus: P2Y purinoceptor 2 (166 aa).

Topologically, residues 1-24 (VHRCLGVLRPLHSLRWGRARYARR) are cytoplasmic. The chain crosses the membrane as a helical span at residues 25 to 45 (VAAVVWVLVLACQAPVLYFVT). Residues 46–72 (TSVRGTRITCHDTSARELFSHFVAYSS) lie on the Extracellular side of the membrane. The chain crosses the membrane as a helical span at residues 73–93 (VMLSLLFAVPFSVILVCYVLM). Over 94 to 115 (ARRLLKPAYGTTGGLPRAKRKS) the chain is Cytoplasmic. A helical transmembrane segment spans residues 116-136 (VRTIALVLAVFTLCFLPFHVT). The Extracellular portion of the chain corresponds to 137–159 (RTLYYSFRSLDLSCHTLNAINMA). Residues 160–166 (YKITRPL) traverse the membrane as a helical segment.

Belongs to the G-protein coupled receptor 1 family.

The protein resides in the cell membrane. Its function is as follows. Receptor for ATP and UTP coupled to G-proteins that activate a phosphatidylinositol-calcium second messenger system. This Cricetulus griseus (Chinese hamster) protein is P2Y purinoceptor 2 (P2RY2).